Consider the following 758-residue polypeptide: 5-methyltetrahydropteroyltriglutamate--homocysteine methyltransferase (758 aa).

Residues 16–19 (RELK) and Lys116 each bind 5-methyltetrahydropteroyltri-L-glutamate. L-homocysteine contacts are provided by residues 436 to 438 (IGS) and Glu489. L-methionine is bound by residues 436–438 (IGS) and Glu489. 5-methyltetrahydropteroyltri-L-glutamate is bound by residues 520-521 (RC) and Trp566. Asp604 provides a ligand contact to L-homocysteine. Asp604 is a binding site for L-methionine. Glu610 contacts 5-methyltetrahydropteroyltri-L-glutamate. Zn(2+)-binding residues include His646, Cys648, and Glu670. His699 functions as the Proton donor in the catalytic mechanism. Cys731 is a Zn(2+) binding site.

Belongs to the vitamin-B12 independent methionine synthase family. The cofactor is Zn(2+).

The enzyme catalyses 5-methyltetrahydropteroyltri-L-glutamate + L-homocysteine = tetrahydropteroyltri-L-glutamate + L-methionine. The protein operates within amino-acid biosynthesis; L-methionine biosynthesis via de novo pathway; L-methionine from L-homocysteine (MetE route): step 1/1. Catalyzes the transfer of a methyl group from 5-methyltetrahydrofolate to homocysteine resulting in methionine formation. The sequence is that of 5-methyltetrahydropteroyltriglutamate--homocysteine methyltransferase from Nitrosococcus oceani (strain ATCC 19707 / BCRC 17464 / JCM 30415 / NCIMB 11848 / C-107).